We begin with the raw amino-acid sequence, 1461 residues long: Regulation of nuclear pre-mRNA domain-containing protein 2 (1461 aa).

Residue alanine 2 is modified to N-acetylalanine. Serine 16 is subject to Phosphoserine. In terms of domain architecture, CID spans 19–149; that stretch reads SAGALESSLD…ALREALSTTF (131 aa). Disordered stretches follow at residues 311 to 438 and 469 to 504; these read STLP…TSLS and NTGV…TTSH. Over residues 352–368 the composition is skewed to basic and acidic residues; the sequence is ESEKSATPEPVTDNRDV. Phosphoserine is present on serine 356. The residue at position 358 (threonine 358) is a Phosphothreonine. Over residues 369-378 the composition is skewed to acidic residues; sequence EDMELSDVED. Serine 374 is modified (phosphoserine). The segment covering 379-394 has biased composition (basic and acidic residues); it reads DGSKIIVEDRKEKPAE. The segment covering 397-416 has biased composition (polar residues); it reads AVSTSVPTKPTENISKASSC. Composition is skewed to low complexity over residues 417-426 and 473-491; these read TPVPVTMTAT and SPAS…NLTS. Phosphoserine is present on residues serine 473, serine 476, and serine 479. Phosphothreonine is present on threonine 482. Serine 485 carries the phosphoserine modification. Residue threonine 517 is modified to Phosphothreonine. The segment at 547 to 623 is disordered; sequence TGNPVPASEA…SPGLPSTTFK (77 aa). Low complexity predominate over residues 553-566; sequence ASEAASQSTSASPA. Serine 564 is subject to Phosphoserine. Residues 567–583 are compositionally biased toward polar residues; that stretch reads NTTVSTIKGRNLPSSAQ. Phosphoserine is present on serine 593. Low complexity predominate over residues 593-614; that stretch reads SPNSSTSEVSSTSASKASIGQS. A Phosphothreonine modification is found at threonine 598. A phosphoserine mark is found at serine 614, serine 663, serine 665, and serine 716. Disordered regions lie at residues 696–849, 900–997, 1016–1102, 1132–1312, and 1340–1461; these read GSSA…MMNL, SENC…EKVL, ASRK…SGEP, STSG…APPL, and FGVL…PPRY. Position 723 is a phosphothreonine (threonine 723). Serine 730 bears the Phosphoserine mark. Phosphothreonine is present on threonine 732. A compositionally biased stretch (polar residues) spans 742-752; the sequence is PTSSSVDTMSL. 2 positions are modified to phosphoserine: serine 758 and serine 762. The span at 758–768 shows a compositional bias: low complexity; it reads SPGSSTPSSTR. Threonine 763 carries the post-translational modification Phosphothreonine. 8 positions are modified to phosphoserine: serine 769, serine 817, serine 826, serine 900, serine 909, serine 928, serine 965, and serine 976. Residues 927 to 954 are compositionally biased toward polar residues; it reads RSPSPSKNDSFFTPDSNHNSLSQSTTGH. Polar residues predominate over residues 1031–1055; the sequence is SKGTPSDGVSLSNLTQPSLTATDQQ. A phosphoserine mark is found at serine 1068 and serine 1099. A compositionally biased stretch (low complexity) spans 1141-1150; the sequence is GPSSASELAS. Over residues 1151 to 1160 the composition is skewed to gly residues; it reads LGGGGSGGLT. Residues 1174-1189 are compositionally biased toward polar residues; that stretch reads FQESVGSFRSNSFNST. 2 stretches are compositionally biased toward pro residues: residues 1267–1277 and 1290–1299; these read FPTPPPPPPPG and STPPPPPPPV. Arginine 1366 bears the Asymmetric dimethylarginine mark. Gly residues predominate over residues 1382-1391; it reads PHGGGGGGGS. Over residues 1417-1434 the composition is skewed to basic and acidic residues; sequence PRPDFRPREPFLSRDPFH. Asymmetric dimethylarginine is present on residues arginine 1424 and arginine 1430.

Associates with the RNA polymerase II complex.

This is Regulation of nuclear pre-mRNA domain-containing protein 2 (RPRD2) from Homo sapiens (Human).